A 101-amino-acid polypeptide reads, in one-letter code: NAD(P)H-quinone oxidoreductase subunit 4L, chloroplastic (101 aa).

Transmembrane regions (helical) follow at residues 2 to 22, 32 to 52, and 61 to 81; these read ILEH…YGLI, MCLE…SDFF, and IFCI…LAIV.

It belongs to the complex I subunit 4L family. NDH is composed of at least 16 different subunits, 5 of which are encoded in the nucleus.

It localises to the plastid. The protein localises to the chloroplast thylakoid membrane. The catalysed reaction is a plastoquinone + NADH + (n+1) H(+)(in) = a plastoquinol + NAD(+) + n H(+)(out). The enzyme catalyses a plastoquinone + NADPH + (n+1) H(+)(in) = a plastoquinol + NADP(+) + n H(+)(out). NDH shuttles electrons from NAD(P)H:plastoquinone, via FMN and iron-sulfur (Fe-S) centers, to quinones in the photosynthetic chain and possibly in a chloroplast respiratory chain. The immediate electron acceptor for the enzyme in this species is believed to be plastoquinone. Couples the redox reaction to proton translocation, and thus conserves the redox energy in a proton gradient. This chain is NAD(P)H-quinone oxidoreductase subunit 4L, chloroplastic, found in Arabis hirsuta (Hairy rock-cress).